Consider the following 447-residue polypeptide: C4-dicarboxylate transport protein (447 aa).

A run of 8 helical transmembrane segments spans residues 22–42 (FQVI…PLVG), 52–72 (FINL…VTGI), 90–110 (AYFL…AHVV), 159–179 (GNIL…ASVG), 199–219 (LVHI…AFTI), 232–252 (WLVG…LGVV), 325–347 (LFIA…LLVA), and 366–386 (AATL…ILGV).

This sequence belongs to the dicarboxylate/amino acid:cation symporter (DAACS) (TC 2.A.23) family.

It is found in the cell inner membrane. Functionally, responsible for the transport of dicarboxylates such as succinate, fumarate, and malate from the periplasm across the membrane. The sequence is that of C4-dicarboxylate transport protein from Stenotrophomonas maltophilia (strain R551-3).